A 363-amino-acid polypeptide reads, in one-letter code: Ribonuclease P protein subunit p40 (363 aa).

In terms of assembly, component of nuclear RNase P and RNase MRP ribonucleoproteins. RNase P consists of a catalytic RNA moiety and about 10 protein subunits; POP1, POP4, POP5, POP7, RPP14, RPP21, RPP25, RPP30, RPP38 and RPP40. Within the RNase P complex, POP1, POP7 and RPP25 form the 'finger' subcomplex, POP5, RPP14, RPP40 and homodimeric RPP30 form the 'palm' subcomplex, and RPP21, POP4 and RPP38 form the 'wrist' subcomplex. All subunits of the RNase P complex interact with the catalytic RNA. Several subunits of RNase P are also part of the RNase MRP complex. RNase MRP consists of a catalytic RNA moiety and about 8 protein subunits; POP1, POP7, RPP25, RPP30, RPP38, RPP40 and possibly also POP4 and POP5.

The protein resides in the nucleus. Its subcellular location is the nucleolus. Functionally, component of ribonuclease P, a ribonucleoprotein complex that generates mature tRNA molecules by cleaving their 5'-ends. Also a component of the MRP ribonuclease complex, which cleaves pre-rRNA sequences. The protein is Ribonuclease P protein subunit p40 (RPP40) of Homo sapiens (Human).